Consider the following 364-residue polypeptide: tRNA 2-selenouridine synthase (364 aa).

In terms of domain architecture, Rhodanese spans 14-137 (LIADTPIIDV…LRQTTIQATI (124 aa)). Cys97 acts as the S-selanylcysteine intermediate in catalysis.

This sequence belongs to the SelU family. As to quaternary structure, monomer.

It catalyses the reaction 5-methylaminomethyl-2-thiouridine(34) in tRNA + selenophosphate + (2E)-geranyl diphosphate + H2O + H(+) = 5-methylaminomethyl-2-selenouridine(34) in tRNA + (2E)-thiogeraniol + phosphate + diphosphate. The enzyme catalyses 5-methylaminomethyl-2-thiouridine(34) in tRNA + (2E)-geranyl diphosphate = 5-methylaminomethyl-S-(2E)-geranyl-thiouridine(34) in tRNA + diphosphate. The catalysed reaction is 5-methylaminomethyl-S-(2E)-geranyl-thiouridine(34) in tRNA + selenophosphate + H(+) = 5-methylaminomethyl-2-(Se-phospho)selenouridine(34) in tRNA + (2E)-thiogeraniol. It carries out the reaction 5-methylaminomethyl-2-(Se-phospho)selenouridine(34) in tRNA + H2O = 5-methylaminomethyl-2-selenouridine(34) in tRNA + phosphate. Its function is as follows. Involved in the post-transcriptional modification of the uridine at the wobble position (U34) of tRNA(Lys), tRNA(Glu) and tRNA(Gln). Catalyzes the conversion of 2-thiouridine (S2U-RNA) to 2-selenouridine (Se2U-RNA). Acts in a two-step process involving geranylation of 2-thiouridine (S2U) to S-geranyl-2-thiouridine (geS2U) and subsequent selenation of the latter derivative to 2-selenouridine (Se2U) in the tRNA chain. The sequence is that of tRNA 2-selenouridine synthase from Escherichia coli (strain 55989 / EAEC).